The chain runs to 665 residues: MTNDVIRIVVCGDEGVGKSSLITSLIKDTYVPNIQKLLPPITIPKGFSSSPDAPLSTVIVDTQFSNSPAEAEHLHREIRQANVIWLVYSDHYSCERVSIFWLPYFRNLGVNLPIVLCANVFDDVDSWNSRDSERIISDEMIPILREFKEIESCIRVSAKLNHNINQAFYLCQKAVMHPIAPLFDAKEGKLKPNAVAALQRVFFLSDRDQDGYLSDQEMLELQVKCFGRSFDATDLIQIRAQLAKINPALATERGVSEEGFITLNRLYADKGRHETTWGILRTFHYTDYLSLSDQFLYPKLDVPENSSVELSPEGYRFLVDLFLLFDKDNDGGLNDSELKTLFKPTPGIPQKWLDFNFPYTTVHDEQGSITLQGWLALWSMTTFLDYKTTMAYLAYLGFEGDNSKKRFSGSSVTVAMTTAAAAAARLTAFKVTKPKKRRSRPRPYYRATPNDRSVFNCFVLGSHMSGKTSLLEAFLNRPLMTDIYKPTIRPVSVVNSVEMTGGKQCYMVMEELGQQEAAVLSNAARLEECDVICYTYDSSDPNSFSYIDGLRRKYPVLDTLPCVFVALKADNDRQQQRFDLQPDEYTKQIRIAAPLHVSSKWPSSVTELFIQLAEAAQQPGRGLPNQDPEEETNTIMPFALAGGATVLLAAAVAWIFKNVRVAGRE.

Residues 1 to 634 (MTNDVIRIVV…NQDPEEETNT (634 aa)) lie on the Cytoplasmic side of the membrane. One can recognise a Miro 1 domain in the interval 3–177 (NDVIRIVVCG…FYLCQKAVMH (175 aa)). GTP contacts are provided by residues 12–19 (GDEGVGKS), 61–67 (DTQFSNS), and 119–122 (NVFD). EF-hand domains lie at 193–228 (NAVA…CFGR) and 313–348 (EGYR…TPGI). Positions 206, 208, 210, 212, 217, 326, 328, 330, and 337 each coordinate Ca(2+). A Miro 2 domain is found at 452–618 (RSVFNCFVLG…FIQLAEAAQQ (167 aa)). GTP is bound by residues 461-468 (GSHMSGKT), 498-502 (EMTGG), and 567-570 (LKAD). Residues 635–655 (IMPFALAGGATVLLAAAVAWI) traverse the membrane as a helical; Anchor for type IV membrane protein segment. At 656–665 (FKNVRVAGRE) the chain is on the mitochondrial intermembrane side.

The protein belongs to the mitochondrial Rho GTPase family.

Its subcellular location is the mitochondrion outer membrane. Functionally, mitochondrial GTPase involved in mitochondrial trafficking. Probably involved in control of anterograde transport of mitochondria and their subcellular distribution. This Yarrowia lipolytica (strain CLIB 122 / E 150) (Yeast) protein is Mitochondrial Rho GTPase 1 (GEM1).